The chain runs to 72 residues: Aurein-2.5 (72 aa).

Positions 1-22 (MAFLKKSLFLVLFLGLVSLSIC) are cleaved as a signal peptide. Residues 23 to 49 (EKEKRQNEEDEDENEAANHEEGSEEKR) constitute a propeptide that is removed on maturation. Residues 27–47 (RQNEEDEDENEAANHEEGSEE) are disordered. The segment covering 38–47 (AANHEEGSEE) has biased composition (basic and acidic residues). Leu-65 is modified (leucine amide). Residues 69-72 (NDLE) constitute a propeptide that is removed on maturation.

This sequence belongs to the frog skin active peptide (FSAP) family. Aurein subfamily. May be monomeric or may oligomerize as homodimers or homotrimers in Gram-positive and Gram-negative bacteria mimetic membranes. In terms of processing, C-terminal amidation enhances antibacterial activity. This increase may be due to stabilization of the alpha-helical structure at the membrane interface. As to expression, expressed by the skin dorsal glands.

Its subcellular location is the secreted. It localises to the target cell membrane. In terms of biological role, amphipathic alpha-helical antimicrobial peptide with moderate to potent activity against Gram-positive bacteria, Gram-negative bacteria and fungi. Also shows a weak activity against biofilm of both Gram-positive and Gram-negative bacteria. Probably acts by disturbing membrane functions with its amphipathic structure. Kills fungi via membranolytic action. Enhanced sterol levels in lipid composition membranes reduce interaction of this peptide with membranes, having a protective effect against the lytic ability of the peptide. Shows anticancer activity. This is Aurein-2.5 from Ranoidea aurea (Green and golden bell frog).